The sequence spans 972 residues: Mast/stem cell growth factor receptor Kit (972 aa).

Positions 1–25 (MRGARRAWDFLFVLQLLLRVQTGSS) are cleaved as a signal peptide. Topologically, residues 26–520 (QPSVSPEELS…QIHAHTLFTP (495 aa)) are extracellular. Ig-like C2-type domains follow at residues 27-112 (PSVS…VFVR), 121-205 (DPPL…LKVR), 212-308 (PVVA…LEVV), 317-410 (PMMN…VYVN), and 413-507 (PEIL…FNFA). 4 disulfides stabilise this stretch: C58/C97, C136/C186, C151/C183, and C233/C290. N94 and N145 each carry an N-linked (GlcNAc...) asparagine glycan. Residues N283, N293, N300, N320, N352, N367, N400, N463, and N486 are each glycosylated (N-linked (GlcNAc...) asparagine). A disulfide bridge links C428 with C491. A helical transmembrane segment spans residues 521–541 (LLIGFVIAAGMMCIIVMILTY). Topologically, residues 542 to 972 (KYLQKPMYEV…TQPLLVHEDV (431 aa)) are cytoplasmic. Phosphotyrosine; by autocatalysis is present on residues Y543, Y549, Y564, and Y566. Y564 is a Mg(2+) binding site. The tract at residues 564–566 (YVY) is important for interaction with phosphotyrosine-binding proteins. The region spanning 585–933 (LSFGKTLGAG…ISESTNHIYS (349 aa)) is the Protein kinase domain. ATP contacts are provided by residues 592–599 (GAGAFGKV), K619, and 667–673 (EYCCYGD). Phosphotyrosine; by autocatalysis occurs at positions 699, 717, and 726. Residues S737 and S742 each carry the phosphoserine; by PKC/PRKCA modification. The active-site Proton acceptor is D788. R792 provides a ligand contact to ATP. Positions 793 and 806 each coordinate Mg(2+). S817 carries the post-translational modification Phosphoserine. The residue at position 819 (Y819) is a Phosphotyrosine; by autocatalysis. S887 carries the post-translational modification Phosphoserine. Phosphotyrosine; by autocatalysis occurs at positions 896 and 932. S955 carries the post-translational modification Phosphoserine.

It belongs to the protein kinase superfamily. Tyr protein kinase family. CSF-1/PDGF receptor subfamily. As to quaternary structure, monomer in the absence of bound KITLG/SCF. Homodimer in the presence of bound KITLG/SCF, forming a heterotetramer with two KITLG/SCF molecules. Interacts (via phosphorylated tyrosine residues) with the adapter proteins GRB2 and GRB7 (via SH2 domain), and SH2B2/APS. Interacts (via C-terminus) with MPDZ (via the tenth PDZ domain). Interacts (via phosphorylated tyrosine residues) with PIK3R1 and PIK3 catalytic subunit. Interacts (via phosphorylated tyrosine) with CRK (isoform Crk-II), FYN, SHC1 and MATK/CHK (via SH2 domain). Interacts with LYN and FES/FPS. Interacts (via phosphorylated tyrosine residues) with the protein phosphatases PTPN6/SHP-1 (via SH2 domain), PTPN11/SHP-2 (via SH2 domain) and PTPRU. Interacts with PLCG1. Interacts with DOK1 and TEC. Interacts with IL1RAP (independent of stimulation with KITLG/SCF). A mast cell-specific KITLG/SCF-induced interleukin-33 signaling complex contains IL1RL1, IL1RAP, KIT and MYD88. Post-translationally, ubiquitinated by SOCS6. KIT is rapidly ubiquitinated after autophosphorylation induced by KITLG/SCF binding, leading to internalization and degradation. Autophosphorylated on tyrosine residues. KITLG/SCF binding promotes autophosphorylation. Phosphorylated tyrosine residues are important for interaction with specific binding partners.

The protein localises to the cell membrane. The catalysed reaction is L-tyrosyl-[protein] + ATP = O-phospho-L-tyrosyl-[protein] + ADP + H(+). With respect to regulation, present in an inactive conformation in the absence of bound ligand. KITLG/SCF binding leads to dimerization and activation by autophosphorylation on tyrosine residues. Activity is down-regulated by PRKCA-mediated phosphorylation on serine residues. Tyrosine-protein kinase that acts as a cell-surface receptor for the cytokine KITLG/SCF and plays an essential role in the regulation of cell survival and proliferation, hematopoiesis, stem cell maintenance, gametogenesis, mast cell development, migration and function, and in melanogenesis. In response to KITLG/SCF binding, KIT can activate several signaling pathways. Phosphorylates PIK3R1, PLCG1, SH2B2/APS and CBL. Activates the AKT1 signaling pathway by phosphorylation of PIK3R1, the regulatory subunit of phosphatidylinositol 3-kinase. Activated KIT also transmits signals via GRB2 and activation of RAS, RAF1 and the MAP kinases MAPK1/ERK2 and/or MAPK3/ERK1. Promotes activation of STAT family members STAT1, STAT3, STAT5A and STAT5B. Activation of PLCG1 leads to the production of the cellular signaling molecules diacylglycerol and inositol 1,4,5-trisphosphate. KIT signaling is modulated by protein phosphatases, and by rapid internalization and degradation of the receptor. Activated KIT promotes phosphorylation of the protein phosphatases PTPN6/SHP-1 and PTPRU, and of the transcription factors STAT1, STAT3, STAT5A and STAT5B. Promotes phosphorylation of PIK3R1, CBL, CRK (isoform Crk-II), LYN, MAPK1/ERK2 and/or MAPK3/ERK1, PLCG1, SRC and SHC1. The protein is Mast/stem cell growth factor receptor Kit (KIT) of Sus scrofa (Pig).